Consider the following 316-residue polypeptide: Transcription factor MafB (316 aa).

Disordered stretches follow at residues 40–78 (PDRA…SPTE) and 116–204 (HQMP…EDRF). Over residues 55–77 (SVSSTPISTPCSSVPSSPSFSPT) the composition is skewed to low complexity. 2 stretches are compositionally biased toward basic residues: residues 130–144 (GHHH…HQNH) and 160–172 (QHPH…HHHQ). Residues 177-198 (PSGSSSSSQQLQNSHQQHQNSS) show a composition bias toward low complexity. The basic motif stretch occupies residues 231-256 (RLKQKRRTLKNRGYAQSCRFKRVQQK). One can recognise a bZIP domain in the interval 231-294 (RLKQKRRTLK…DAYKIKCEKL (64 aa)). The interval 259–280 (LENEKTQLIQQVEQLKLEVSRL) is leucine-zipper.

This sequence belongs to the bZIP family. Maf subfamily. Homodimer or heterodimer with other bHLH-Zip transcription factors. Binds DNA as a homodimer or a heterodimer.

The protein localises to the nucleus. In terms of biological role, acts as a transcriptional activator or repressor. Implicated in the regulation of cell-type specific gene expression and play a role in inductive events during lens development. The protein is Transcription factor MafB (mafb) of Xenopus tropicalis (Western clawed frog).